Here is a 149-residue protein sequence, read N- to C-terminus: UPF0310 protein msl3206 (149 aa).

Belongs to the UPF0310 family.

This chain is UPF0310 protein msl3206, found in Mesorhizobium japonicum (strain LMG 29417 / CECT 9101 / MAFF 303099) (Mesorhizobium loti (strain MAFF 303099)).